The chain runs to 351 residues: Probable minor fimbrial subunit LpfD (351 aa).

The first 22 residues, 1–22 (MKAAIALSLLGCVFGFSGKAFA), serve as a signal peptide directing secretion.

This sequence belongs to the fimbrial protein family.

The protein resides in the fimbrium. Functionally, part of the lpfABCC'DE fimbrial operon. LP fimbriae may participate in the interaction with eukaryotic cells by assisting in microcolony formation. The sequence is that of Probable minor fimbrial subunit LpfD (lpfD) from Escherichia coli O157:H7.